Reading from the N-terminus, the 287-residue chain is 33 kDa chaperonin (287 aa).

2 disulfide bridges follow: Cys-231–Cys-233 and Cys-264–Cys-267.

Belongs to the HSP33 family. Under oxidizing conditions two disulfide bonds are formed involving the reactive cysteines. Under reducing conditions zinc is bound to the reactive cysteines and the protein is inactive.

Its subcellular location is the cytoplasm. In terms of biological role, redox regulated molecular chaperone. Protects both thermally unfolding and oxidatively damaged proteins from irreversible aggregation. Plays an important role in the bacterial defense system toward oxidative stress. The protein is 33 kDa chaperonin of Thermosipho melanesiensis (strain DSM 12029 / CIP 104789 / BI429).